A 118-amino-acid chain; its full sequence is MKTYAIIEAGGEQLQVEPGRFYNIRHLSLRGVNFWGQNTKLLLYRVLMIRHQSATVLGNPWVQNATVKGRILDARRDDKLVIYKMRAKKKTRRKRGHRQGLTRFVVDAICLNGKVLLD.

This sequence belongs to the bacterial ribosomal protein bL21 family. In terms of assembly, part of the 50S ribosomal subunit.

The protein resides in the plastid. It is found in the chloroplast. In terms of biological role, this protein binds to 23S rRNA. This Zygnema circumcarinatum (Green alga) protein is Large ribosomal subunit protein bL21c.